Here is a 199-residue protein sequence, read N- to C-terminus: SCO2-like protein RC0042 (199 aa).

This sequence belongs to the SCO1/2 family.

In Rickettsia conorii (strain ATCC VR-613 / Malish 7), this protein is SCO2-like protein RC0042.